The chain runs to 127 residues: uncharacterized protein (127 aa).

Transmembrane regions (helical) follow at residues 48–68 (LYSL…PLSI) and 83–103 (VFLF…CLID).

Its subcellular location is the membrane. This is an uncharacterized protein from Saccharomyces cerevisiae (strain ATCC 204508 / S288c) (Baker's yeast).